A 329-amino-acid polypeptide reads, in one-letter code: Probable cell division protein WhiA (329 aa).

Positions 275 to 308 (SLEELGALADPPLTKDAVAGRIRRLLAMADKRAQ) form a DNA-binding region, H-T-H motif.

It belongs to the WhiA family.

Its function is as follows. Involved in cell division and chromosome segregation. The sequence is that of Probable cell division protein WhiA from Streptomyces avermitilis (strain ATCC 31267 / DSM 46492 / JCM 5070 / NBRC 14893 / NCIMB 12804 / NRRL 8165 / MA-4680).